The primary structure comprises 166 residues: MSGIIEAKKQLVEQIADQLKNSVSTVIVNYRGLTVAEVTELRKQLREAGVEYKVYKNTMMRRAAEQAGLEGLDEFLTGPTAVATSTEDVVAPAKVIAGFAKEHEALEIKTGVMDGSIISAEEVKTVGSLPSHDGLVSMLLSVLQAPVRNFAYAVKAVGESKEESAE.

It belongs to the universal ribosomal protein uL10 family. Part of the ribosomal stalk of the 50S ribosomal subunit. The N-terminus interacts with L11 and the large rRNA to form the base of the stalk. The C-terminus forms an elongated spine to which L12 dimers bind in a sequential fashion forming a multimeric L10(L12)X complex.

In terms of biological role, forms part of the ribosomal stalk, playing a central role in the interaction of the ribosome with GTP-bound translation factors. This chain is Large ribosomal subunit protein uL10, found in Staphylococcus carnosus (strain TM300).